The sequence spans 327 residues: Delta-aminolevulinic acid dehydratase (327 aa).

Residues Cys119, Cys121, and Cys129 each contribute to the Zn(2+) site. Lys198 functions as the Schiff-base intermediate with substrate in the catalytic mechanism. 2 residues coordinate 5-aminolevulinate: Arg208 and Arg220. Glu236 serves as a coordination point for Mg(2+). Lys251 serves as the catalytic Schiff-base intermediate with substrate. Residues Ser277 and Tyr316 each coordinate 5-aminolevulinate.

It belongs to the ALAD family. In terms of assembly, homooctamer. The cofactor is Zn(2+).

It carries out the reaction 2 5-aminolevulinate = porphobilinogen + 2 H2O + H(+). It functions in the pathway porphyrin-containing compound metabolism; protoporphyrin-IX biosynthesis; coproporphyrinogen-III from 5-aminolevulinate: step 1/4. In terms of biological role, catalyzes an early step in the biosynthesis of tetrapyrroles. Binds two molecules of 5-aminolevulinate per subunit, each at a distinct site, and catalyzes their condensation to form porphobilinogen. The polypeptide is Delta-aminolevulinic acid dehydratase (hemB) (Synechocystis sp. (strain ATCC 27184 / PCC 6803 / Kazusa)).